The chain runs to 379 residues: Small ribosomal subunit protein uS2cy (379 aa).

The tract at residues 1–94 (MKLVQFFEIG…MGTSSNRAKS (94 aa)) is N-terminal extension. The disordered stretch occupies residues 83-106 (NQMGTSSNRAKSTDTPAVSTSQNV).

The protein belongs to the universal ribosomal protein uS2 family.

Its subcellular location is the plastid. The protein resides in the chloroplast. This chain is Small ribosomal subunit protein uS2cy (rps2-2), found in Tetradesmus obliquus (Green alga).